A 384-amino-acid polypeptide reads, in one-letter code: G protein-coupled receptor 88 (384 aa).

Residues 1 to 35 lie on the Extracellular side of the membrane; it reads MTNSSSTSTSTTTGGSLLLLCEEEESWAGRRIPVS. N-linked (GlcNAc...) asparagine glycosylation occurs at Asn-3. A helical membrane pass occupies residues 36–56; sequence LLYSGLAIGGTLANGMVIYLV. Residues 57–73 lie on the Cytoplasmic side of the membrane; that stretch reads SSFRKLQTTSNAFIVNG. Residues 74–94 form a helical membrane-spanning segment; it reads CAADLSVCALWMPQEAVLGLL. At 95 to 116 the chain is on the extracellular side; the sequence is PAGSAEPPGDWDSGGGSYRLLR. A helical membrane pass occupies residues 117-136; that stretch reads GGLLGLGLTVSLLSHCLVAL. Residues 137–158 lie on the Cytoplasmic side of the membrane; that stretch reads NRYLLITRAPATYQVLYQRRHT. The chain crosses the membrane as a helical span at residues 159-179; it reads AGMLALSWALALGLVLLLPPW. Topologically, residues 180–195 are extracellular; that stretch reads APKPGAEPPQVHYPAL. A helical transmembrane segment spans residues 196–216; the sequence is LAAGALLAQTALLLHCYLGIV. The Cytoplasmic segment spans residues 217–285; that stretch reads RRVRVSVKRV…RAQRRLSGLS (69 aa). A helical membrane pass occupies residues 286–306; it reads VLLLCCVFLLATQPLVWVSLA. Residues 307–310 are Extracellular-facing; sequence SGFS. A helical transmembrane segment spans residues 311–331; sequence LPVPWGVQAASWLLCCALSAL. Residues 332 to 384 are Cytoplasmic-facing; it reads NPLLYTWRNEEFRRSVRSVLPGVGDAAAAAAAATAVPAMSQAQLGTRAAGQHW.

It belongs to the G-protein coupled receptor 1 family. In terms of tissue distribution, expressed predominantly in the striatum. Expressed also in olfactory tubercle, nucleus accumbens, amygdala, and neocortex. Spinal cord, pons, and medulla expression remains discrete. Also expressed in peripheral tissues, including adrenal cortex (16 dpc to 21 dpc) and cochlear ganglia (19 dpc to P3) and also at moderate levels in retina (18 dpc to 19 dpc) and spleen (21 dpc to P7).

The protein localises to the cell membrane. The protein resides in the cell projection. It localises to the cilium membrane. It is found in the cytoplasm. Its subcellular location is the nucleus. Functionally, orphan G protein-coupled receptor implicated in a large repertoire of behavioral responses that engage motor activities, spatial learning, and emotional processing. May play a role in the regulation of cognitive and motor function. Couples with the heterotrimeric G protein complex of the G(i) subfamily, consisting of GNAI1, GNB1 and GNG2, thereby acting through a G(i)-mediated pathway. Plays a role in the attenuation of D1 dopamine receptor (D1R)-mediated cAMP response in ciliated cells. In non-ciliated cells, involved in the inhibition of the beta-2 adrenergic receptor (B2AR) response. This chain is G protein-coupled receptor 88 (Gpr88), found in Rattus norvegicus (Rat).